The chain runs to 516 residues: uncharacterized protein (516 aa).

9 helical membrane-spanning segments follow: residues Ser183–Val203, Val261–Ile281, Val308–Leu328, Leu329–Phe349, Leu356–Leu376, Leu379–Ala399, Leu430–Leu450, Pro461–Leu481, and Ile492–Phe512.

The protein localises to the cell membrane. Its function is as follows. Possible permease/transporter. This is an uncharacterized protein from Sinorhizobium fredii (strain NBRC 101917 / NGR234).